The sequence spans 264 residues: S-adenosylmethionine decarboxylase proenzyme (264 aa).

Serine 113 serves as the catalytic Schiff-base intermediate with substrate; via pyruvic acid. The residue at position 113 (serine 113) is a Pyruvic acid (Ser); by autocatalysis. Histidine 118 (proton acceptor; for processing activity) is an active-site residue. The active-site Proton donor; for catalytic activity is cysteine 141.

It belongs to the prokaryotic AdoMetDC family. Type 2 subfamily. In terms of assembly, heterooctamer of four alpha and four beta chains arranged as a tetramer of alpha/beta heterodimers. The cofactor is pyruvate. In terms of processing, is synthesized initially as an inactive proenzyme. Formation of the active enzyme involves a self-maturation process in which the active site pyruvoyl group is generated from an internal serine residue via an autocatalytic post-translational modification. Two non-identical subunits are generated from the proenzyme in this reaction, and the pyruvate is formed at the N-terminus of the alpha chain, which is derived from the carboxyl end of the proenzyme. The post-translation cleavage follows an unusual pathway, termed non-hydrolytic serinolysis, in which the side chain hydroxyl group of the serine supplies its oxygen atom to form the C-terminus of the beta chain, while the remainder of the serine residue undergoes an oxidative deamination to produce ammonia and the pyruvoyl group blocking the N-terminus of the alpha chain.

It catalyses the reaction S-adenosyl-L-methionine + H(+) = S-adenosyl 3-(methylsulfanyl)propylamine + CO2. It functions in the pathway amine and polyamine biosynthesis; S-adenosylmethioninamine biosynthesis; S-adenosylmethioninamine from S-adenosyl-L-methionine: step 1/1. Its function is as follows. Catalyzes the decarboxylation of S-adenosylmethionine to S-adenosylmethioninamine (dcAdoMet), the propylamine donor required for the synthesis of the polyamines spermine and spermidine from the diamine putrescine. This Pseudomonas syringae pv. syringae (strain B728a) protein is S-adenosylmethionine decarboxylase proenzyme.